A 156-amino-acid polypeptide reads, in one-letter code: Ribosomal RNA large subunit methyltransferase H (156 aa).

Residues leucine 73, glycine 104, and 123 to 128 contribute to the S-adenosyl-L-methionine site; that span reads LSPLTL.

The protein belongs to the RNA methyltransferase RlmH family. As to quaternary structure, homodimer.

It localises to the cytoplasm. The enzyme catalyses pseudouridine(1915) in 23S rRNA + S-adenosyl-L-methionine = N(3)-methylpseudouridine(1915) in 23S rRNA + S-adenosyl-L-homocysteine + H(+). Its function is as follows. Specifically methylates the pseudouridine at position 1915 (m3Psi1915) in 23S rRNA. The polypeptide is Ribosomal RNA large subunit methyltransferase H (Sodalis glossinidius (strain morsitans)).